The following is a 415-amino-acid chain: Zinc finger protein ZFMSA12A (415 aa).

Residues 1 to 36 are disordered; sequence MGIQDARWPSEDEETHLLDSSSAEQTRGEKCSDSTP. C2H2-type zinc fingers lie at residues 78–100, 106–129, 134–156, 161–183, 189–211, 217–239, 245–267, 273–295, 301–323, 329–351, 357–379, and 385–407; these read HKCTQCGKCFIYRYELLEHQRLH, YRCSQCGKAFRRTSDLSSHRRTQC, YICIKCGNSFQSIQEKFRHQCVH, FDCSQCGKSFKKMHLLGKHELTH, FTCRQCGKVYPGMSELRSHQKIH, NQCMQCGKFFSSSACLTAHEVRH, QICARCGKAFKNKHDLNLHMRSH, FQCTYCGKRFSVSGNLNIHVRTH, YLCSDCGKAFISAGELQIHRRTH, YKCSVCGRGFTMASKVTLHMRVH, YVCSECGKGFSRGSELKKHSMNH, and YACQLCAKTYTCLNHLKRHLKTH.

It is found in the nucleus. The protein is Zinc finger protein ZFMSA12A of Micropterus salmoides (Largemouth bass).